The following is an 862-amino-acid chain: MPAKASLEGIEQVWSRVWEQNGTYRFDRSVTRDEVYSIDTPPPTVSGALHVGHVFSYTHADAIARFQRMRGKMVFYPMGWDDNGLPTERRVQNYYGVQCDPSLPYDPGYTPPTEPPGRPQPISRRNFVELCRNLTKIDEQAFEALWRHLGLSVDWSLTYATIDDRSRAISQRAFLRNLARGEAYLADAPTLWDVSFRTAVAQAELEDRERQGHYYRLSFTSAAGDTIHVETTRPELLPACVALVAHPDDKRYQHLFGSTAVTPVFRVPVPIKAHPLAQPDKGSGIAMICTFGDLTDVLWWRELALPTRPVMGRDGRLLPEPPPGITNAEAVAAYRTLAGLTAFSAKAKMVELLRASGDLAGDPQPTAQAVKFYEKGDKPLEIVTTRQWYVRNGGRNAQLRAALIRRGRELSWSPRFMRSRYENWVEGLAGDWIISRQRFFGVPIPVWYPLDDSGEPDYERPILPDDAALPVDPSSDTPTGYHDSQRHQPGGFMADPDVMDTWATSSLTPEIAGGWTVDDDLFGRVFPMDLRPQAHEIIRTWLFATMLRSHQEFDRLPWRTALLSGWILDPDRKKMSKSKGNSVVTPMSLLAEYGSDAVRYWAVSGRPGTDTAFDTGQMKIGRRLAIKILNATKFVLRFESPTLRAPHVAHVTEPLDRSMLARLADVVAAATTGFTQYDYTRSLECTEHFFWSFCDDYLELVKERAYGNPDDPAVRSAHAALALALRTLLRLFAPMLPFVTEEAWSWWQEGSVHRASWPARQELVGDADGVDRANRIDETNGSDEAVEDLLGLASGVLAAIRRAKSEAKQSMRASVARLTLRGRASDLAAFALVSRDVRAAGVVRDVDTAEADVPLTPEITLG.

The short motif at 43-53 (PTVSGALHVGH) is the 'HIGH' region element. A disordered region spans residues 459–494 (ERPILPDDAALPVDPSSDTPTGYHDSQRHQPGGFMA). Residues 574-578 (KMSKS) carry the 'KMSKS' region motif. Residue Lys-577 participates in ATP binding.

This sequence belongs to the class-I aminoacyl-tRNA synthetase family. ValS type 2 subfamily. In terms of assembly, monomer.

Its subcellular location is the cytoplasm. It carries out the reaction tRNA(Val) + L-valine + ATP = L-valyl-tRNA(Val) + AMP + diphosphate. Its function is as follows. Catalyzes the attachment of valine to tRNA(Val). As ValRS can inadvertently accommodate and process structurally similar amino acids such as threonine, to avoid such errors, it has a 'posttransfer' editing activity that hydrolyzes mischarged Thr-tRNA(Val) in a tRNA-dependent manner. The chain is Valine--tRNA ligase from Salinispora arenicola (strain CNS-205).